The primary structure comprises 362 residues: Histidinol-phosphate aminotransferase (362 aa).

An N6-(pyridoxal phosphate)lysine modification is found at Lys219.

The protein belongs to the class-II pyridoxal-phosphate-dependent aminotransferase family. Histidinol-phosphate aminotransferase subfamily. As to quaternary structure, homodimer. Requires pyridoxal 5'-phosphate as cofactor.

It carries out the reaction L-histidinol phosphate + 2-oxoglutarate = 3-(imidazol-4-yl)-2-oxopropyl phosphate + L-glutamate. The protein operates within amino-acid biosynthesis; L-histidine biosynthesis; L-histidine from 5-phospho-alpha-D-ribose 1-diphosphate: step 7/9. The protein is Histidinol-phosphate aminotransferase of Maricaulis maris (strain MCS10) (Caulobacter maris).